A 278-amino-acid polypeptide reads, in one-letter code: MEMLEEHRCFEGWQQRWRHDSSTLNCPMTFSIFLPPPRDHTPPPVLYWLSGLTCNDENFTTKAGAQRVAAELGIVLVMPDTSPRGEQVANDDGYDLGQGAGFYLNATQPPWATHYRMYDYLRDELPALVQSQFNVSDRCAISGHSMGGHGALIMALKNPGKYTSVSAFAPIVNPCSVPWGIKAFSTYLGEDKNAWLEWDSCALMYASNAQDAIPTLIDQGDNDQFLADQLQPAVLAEAARQKAWPMTLRIQPGYDHSYYFIASFIEDHLRFHAQYLLK.

Active-site charge relay system residues include serine 145, aspartate 223, and histidine 256.

Belongs to the esterase D family.

It carries out the reaction S-formylglutathione + H2O = formate + glutathione + H(+). Serine hydrolase involved in the detoxification of formaldehyde. Hydrolyzes S-formylglutathione to glutathione and formate. This Escherichia coli O6:K15:H31 (strain 536 / UPEC) protein is S-formylglutathione hydrolase YeiG (yeiG).